Consider the following 843-residue polypeptide: Axin-2 (843 aa).

The interval 1-75 (MSSAMLVTCL…EGRASPDSPL (75 aa)) is disordered. Positions 21–30 (APRPPVPGEE) match the Tankyrase-binding motif motif. The segment covering 56–69 (RRNEDGLGEPEGRA) has biased composition (basic and acidic residues). One can recognise an RGS domain in the interval 81-200 (SLHSLLGDQD…LTSDIYLEYV (120 aa)). An interaction with GSK3B region spans residues 327–413 (VGSKKQLQRE…REGSELTLNS (87 aa)). Residues 334-393 (QREMHRSVKANGQVSLPHFPRTHRLPKEMTPVEPATFAAELISRLEKLKLELESRHSLEE) form an interaction with SIAH1 and SIAH2 region. Disordered stretches follow at residues 396 to 435 (QQIREDEEREGSELTLNSREGAPTQHPLSLLPSGSYEEDP), 447 to 494 (LKTP…AASP), 561 to 674 (APET…RTTP), and 718 to 748 (ASQQRDRNHSATVQTGATPFSNPSLAPEDHK). The tract at residues 413 to 476 (SREGAPTQHP…PDHHHHHHSQ (64 aa)) is interaction with beta-catenin. Composition is skewed to low complexity over residues 477–494 (YHSLLPPGGKLPPAAASP) and 588–597 (PGLALPAREG). The segment covering 727 to 741 (SATVQTGATPFSNPS) has biased composition (polar residues). A DIX domain is found at 761–843 (ASELVVTYFF…RILGKVERID (83 aa)).

Interacts with glycogen synthase kinase-3 beta (GSK3B) and beta-catenin. The interaction between axin and beta-catenin occurs via the armadillo repeats contained in beta-catenin. Interacts with SMAD7 and RNF111. Interacts with ANKRD6. Interacts with SIAH1. Interacts with SIAH2. Probably phosphorylated by GSK3B and dephosphorylated by PP2A. Post-translationally, ADP-ribosylated by tankyrase TNKS and TNKS2. Poly-ADP-ribosylated protein is recognized by RNF146, followed by ubiquitination and subsequent activation of the Wnt signaling pathway. In terms of processing, ubiquitinated by RNF146 when poly-ADP-ribosylated, leading to its degradation and subsequent activation of the Wnt signaling pathway. Deubiquitinated by USP34, deubiquitinated downstream of beta-catenin stabilization step: deubiquitination is important Wnt signaling to positively regulate beta-catenin (CTNBB1)-mediated transcription. Expressed in brain and lymphoblast.

It is found in the cytoplasm. In terms of biological role, inhibitor of the Wnt signaling pathway. Down-regulates beta-catenin. Probably facilitate the phosphorylation of beta-catenin and APC by GSK3B. The polypeptide is Axin-2 (AXIN2) (Homo sapiens (Human)).